Reading from the N-terminus, the 373-residue chain is mRNA-decapping enzyme subunit 2 (373 aa).

A Nudix hydrolase domain is found at 106 to 234 (CRVPVTGAII…HGVSGLKLYM (129 aa)). A Nudix box motif is present at residues 139 to 160 (GKKSKDEEDHACAIREVLEETG). Mg(2+)-binding residues include Glu154 and Glu158. The ATP site is built by Arg178 and Tyr233. An RNA binding region spans residues 233 to 250 (YMVAPFLSSLKSWILKHP). A disordered region spans residues 275 to 342 (GNGTATVESQ…ESHNTKPVVD (68 aa)). Basic and acidic residues predominate over residues 298 to 323 (NSRKPELKRTTMESHSTKPELRKGTM). Residues 324 to 334 (ESHNTTATVES) are compositionally biased toward polar residues. The PDZ-binding signature appears at 370-373 (GNSA).

The protein belongs to the Nudix hydrolase family. DCP2 subfamily. As to quaternary structure, homodimer. Catalytic component of the decapping complex. Interacts with DCP1, DCP5 and VCS. Requires Mn(2+) as cofactor. Mg(2+) is required as a cofactor. In terms of tissue distribution, expressed in seedlings, mostly in root tips, root hairs, and the vascular system. Also present in roots, leaves, stems, and flowers.

It localises to the cytoplasm. It is found in the P-body. It carries out the reaction a 5'-end (N(7)-methyl 5'-triphosphoguanosine)-ribonucleoside in mRNA + H2O = N(7)-methyl-GDP + a 5'-end phospho-ribonucleoside in mRNA + 2 H(+). Inhibited by the product 7-methyl GDP. Catalytic component of the decapping complex necessary for the degradation of mRNAs, both in normal mRNA turnover and in nonsense-mediated mRNA decay. Removes the 7-methyl guanine cap structure from mRNA molecules, yielding a 5'-phosphorylated mRNA fragment and 7m-GDP. Essential for postembryonic development, especially during the formation of the shoot apical meristem (SAM). This chain is mRNA-decapping enzyme subunit 2 (DCP2), found in Arabidopsis thaliana (Mouse-ear cress).